The chain runs to 247 residues: MNTEIEVCIDNLESLYNALSGGANRIELCSSLALGGLTPSFGMMKQAAKISSVPVYAMIRPRQGDFIFDYDDILCMLEDIEACARAGVNGVVLGVLTPDGEIDMSAMQILSSKAHQLKLAITFHRAIDQLQDYKVPLEQIIELGCERILTSGLAINAEQGINVLADMVKQADGRIDIMAGAGVNATNAKMIQSTTQVPALHLSGKSTRPSLMESNSSAQMGSNDVDDYQIPVTDANKISNVRAALTA.

Positions 205–222 are enriched in polar residues; that stretch reads KSTRPSLMESNSSAQMGS. Residues 205–226 are disordered; it reads KSTRPSLMESNSSAQMGSNDVD.

Belongs to the CutC family.

The protein resides in the cytoplasm. The polypeptide is PF03932 family protein CutC (Vibrio atlanticus (strain LGP32) (Vibrio splendidus (strain Mel32))).